The primary structure comprises 171 residues: Deoxyuridine 5'-triphosphate nucleotidohydrolase (171 aa).

Glutamate 143 serves as a coordination point for Mg(2+).

It belongs to the dUTPase family. In terms of assembly, homotrimer. Mg(2+) is required as a cofactor.

It carries out the reaction dUTP + H2O = dUMP + diphosphate + H(+). It participates in pyrimidine metabolism; dUMP biosynthesis; dUMP from dCTP (dUTP route): step 2/2. In terms of biological role, this enzyme is involved in nucleotide metabolism: it produces dUMP, the immediate precursor of thymidine nucleotides and it decreases the intracellular concentration of dUTP, preventing uracil incorporation into DNA. The polypeptide is Deoxyuridine 5'-triphosphate nucleotidohydrolase (DUT) (Oryza sativa subsp. japonica (Rice)).